Consider the following 517-residue polypeptide: Zinc finger protein AEBP2 (517 aa).

The tract at residues 1 to 229 (MAAAITDMAD…DSEDSISSTI (229 aa)) is disordered. Ala2 carries the post-translational modification N-acetylalanine. 2 positions are modified to phosphoserine: Ser18 and Ser24. Over residues 36–51 (PEEEEEEEEEEEEAEA) the composition is skewed to acidic residues. Residues 61 to 78 (GGSGGGGGGGGGGVGGGE) are compositionally biased toward gly residues. The span at 94 to 121 (GEDEDEEEDDEEEEDESSSSGGGEEESS) shows a compositional bias: acidic residues. Residues 122-150 (AESLVGSSGGSSSDETRSLSPGAASSSSG) show a composition bias toward low complexity. Ser141 is subject to Phosphoserine. The segment covering 152 to 163 (GDGKEGLEEPKG) has biased composition (basic and acidic residues). Composition is skewed to gly residues over residues 166–175 (GSQGGGGGGS) and 185–196 (GDEGYGTGGGGS). A phosphoserine mark is found at Ser206, Ser210, and Ser211. Positions 209-294 (MSSDGEPLSR…IHVDGQRGGV (86 aa)) are interaction with RBBP4. The C2H2-type 1 zinc finger occupies 261 to 286 (YNCCWDQCQACFNSSPDLADHIRSIH). The segment at 300–322 (KGCKVYNTPSTSQSWLQRHMLTH) adopts a C2H2-type 2; degenerate zinc-finger fold. A C2H2-type 3 zinc finger spans residues 328 to 352 (FKCVVGGCNASFASQGGLARHVPTH). The segment covering 352–365 (HFSQQNSSKVSSQP) has biased composition (polar residues). The disordered stretch occupies residues 352-394 (HFSQQNSSKVSSQPKAKEESPSKAGMNKRRKLKNKRRRSLPRP). A compositionally biased stretch (basic residues) spans 377–392 (MNKRRKLKNKRRRSLP). Position 390 is a phosphoserine (Ser390). The interval 407–478 (RHRAICFNLS…QLKTKVVHLS (72 aa)) is interaction with SUZ12. Residues 495–517 (TMPQKRLKRTLIRKVFNLYLSKQ) are important for nucleosome binding activity of the PRC2 complex.

Belongs to the AEBP2/jing C2H2-type zinc-finger family. Self-associates. Associates with the PRC2 complex, which consists of the core components EED, EZH1 or EZH2, SUZ12, and RBBP4, and various combinations of accessory subunits including AEBP2, JARID2, PHF19, MTF2 and EPOP. Found in a monomeric PRC2.2 (class 2) complex consisting of at least SUZ12, RBBP4, AEBP2 and JARID2. Within the PRC2 complex, interacts directly with SUZ12; competes with PHF19 for SUZ12 binding. Interacts with EED, EZH2, and RBBP4. May also interact with RBBP7.

The protein localises to the nucleus. In terms of biological role, acts as an accessory subunit for the core Polycomb repressive complex 2 (PRC2), which mediates histone H3K27 (H3K27me3) trimethylation on chromatin leading to transcriptional repression of the affected target gene. Plays a role in nucleosome localization of the PRC2 complex. This is Zinc finger protein AEBP2 (AEBP2) from Homo sapiens (Human).